We begin with the raw amino-acid sequence, 299 residues long: Non-structural protein V (299 aa).

Residues 40 to 98 form a disordered region; it reads SDNPGQEQATCKEEEAGASGLSKPCLSAIGSTEGGAPRIRGQGSGESDDDTETLGFPSR. An interaction with host STAT1 region spans residues 110 to 120; it reads YYVYDHSGEAV. Over residues 134 to 145 the composition is skewed to low complexity; it reads GLDGDSTLSGGD. 2 disordered regions span residues 134–174 and 204–230; these read GLDG…APIS and PKLGKTLNVPPPPDPGRASTSETPIKK. Residues 146 to 160 are compositionally biased toward acidic residues; the sequence is NESENSDVDIGEPDT. Zn(2+) contacts are provided by His232, Cys251, Cys255, Cys267, Cys269, Cys272, Cys276, and Cys279.

This sequence belongs to the paramyxoviruses V protein family. Interacts with host IFIH1/MDA5 and DHX58/LGP2; these interactions are involved in the inhibition of the host type I interferon signaling pathway. Interacts with host TYK2; this interaction inhibits the type I interferon signaling pathway without affecting the type II pathway. Interacts with host IRF7; this interaction inhibits IRF7 translocation to the nucleus. Interacts with host CHUK. Interacts with host RELA/p65; this interaction inhibits the nuclear translocation of NF-KappaB. Interacts (via N-terminus) with host STAT1 and JAK1; these interactions inhibit STAT1 phosphorylation by Jak1 and thereby the type I interferon signaling pathway. Interacts (via C-terminus) with host STAT2; this interaction is involved in the inhibition of the host type I interferon signaling pathway. Forms a complex with host PPP1CA and PPP1CC; this interaction prevents dephosphorylation of host IFIH1/MDA5 and leads to the inhibition of the host type I interferon signaling pathway. Interacts with host IRF9; this interaction prevents the binding of IRF9 to STAT2 and thereby the type I interferon signaling pathway. Interacts with host RIGI regulatory protein (via CARDs domain) and host TRIM25 (via SPRY domain); these interactions prevent TRIM25-mediated ubiquitination of RIG-I and disrupts downstream RIG-I signaling.

It is found in the host cytoplasm. Plays an essential role in the inhibition of host immune response. Prevents the establishment of cellular antiviral state by blocking interferon-alpha/beta (IFN-alpha/beta) production and signaling pathway. Interacts with host IFIH1/MDA5 and DHX58/LGP2 to inhibit the transduction pathway involved in the activation of IFN-beta promoter, thus protecting the virus against cell antiviral state. Blocks the type I interferon signaling pathway by interacting with host TYK2 and thereby inhibiting downstream STAT1 and STAT2 phosphorylation. Blocks the type I interferon signaling pathway by disrupting the RIG-I signaling pathway. Moderately affects the type II interferon signaling. Prevents PP1alpha/gamma-mediated dephosphorylation of host IFIH1/MDA5 and thus blocks its activation. In Measles virus (strain IP-3-Ca) (MeV), this protein is Non-structural protein V (P/V).